The chain runs to 364 residues: Aminomethyltransferase (364 aa).

It belongs to the GcvT family. In terms of assembly, the glycine cleavage system is composed of four proteins: P, T, L and H.

It catalyses the reaction N(6)-[(R)-S(8)-aminomethyldihydrolipoyl]-L-lysyl-[protein] + (6S)-5,6,7,8-tetrahydrofolate = N(6)-[(R)-dihydrolipoyl]-L-lysyl-[protein] + (6R)-5,10-methylene-5,6,7,8-tetrahydrofolate + NH4(+). Its function is as follows. The glycine cleavage system catalyzes the degradation of glycine. The polypeptide is Aminomethyltransferase (Proteus mirabilis (strain HI4320)).